The primary structure comprises 359 residues: Probable dual-specificity RNA methyltransferase RlmN (359 aa).

The active-site Proton acceptor is the glutamate 93. In terms of domain architecture, Radical SAM core spans 107-337 (KSERVTLCVS…VTMRYEKGHD (231 aa)). A disulfide bridge connects residues cysteine 114 and cysteine 342. [4Fe-4S] cluster-binding residues include cysteine 121, cysteine 125, and cysteine 128. S-adenosyl-L-methionine contacts are provided by residues 168 to 169 (GE), serine 200, 223 to 225 (SLH), and asparagine 299. Cysteine 342 (S-methylcysteine intermediate) is an active-site residue.

This sequence belongs to the radical SAM superfamily. RlmN family. [4Fe-4S] cluster serves as cofactor.

Its subcellular location is the cytoplasm. The enzyme catalyses adenosine(2503) in 23S rRNA + 2 reduced [2Fe-2S]-[ferredoxin] + 2 S-adenosyl-L-methionine = 2-methyladenosine(2503) in 23S rRNA + 5'-deoxyadenosine + L-methionine + 2 oxidized [2Fe-2S]-[ferredoxin] + S-adenosyl-L-homocysteine. It carries out the reaction adenosine(37) in tRNA + 2 reduced [2Fe-2S]-[ferredoxin] + 2 S-adenosyl-L-methionine = 2-methyladenosine(37) in tRNA + 5'-deoxyadenosine + L-methionine + 2 oxidized [2Fe-2S]-[ferredoxin] + S-adenosyl-L-homocysteine. Functionally, specifically methylates position 2 of adenine 2503 in 23S rRNA and position 2 of adenine 37 in tRNAs. This is Probable dual-specificity RNA methyltransferase RlmN from Akkermansia muciniphila (strain ATCC BAA-835 / DSM 22959 / JCM 33894 / BCRC 81048 / CCUG 64013 / CIP 107961 / Muc).